We begin with the raw amino-acid sequence, 329 residues long: Beta-ketoacyl-[acyl-carrier-protein] synthase III (329 aa).

Active-site residues include Cys-123 and His-256. Positions 257–261 (QANIR) are ACP-binding. Residue Asn-286 is part of the active site.

Belongs to the thiolase-like superfamily. FabH family. As to quaternary structure, homodimer.

It localises to the cytoplasm. The enzyme catalyses malonyl-[ACP] + acetyl-CoA + H(+) = 3-oxobutanoyl-[ACP] + CO2 + CoA. It participates in lipid metabolism; fatty acid biosynthesis. Catalyzes the condensation reaction of fatty acid synthesis by the addition to an acyl acceptor of two carbons from malonyl-ACP. Catalyzes the first condensation reaction which initiates fatty acid synthesis and may therefore play a role in governing the total rate of fatty acid production. Possesses both acetoacetyl-ACP synthase and acetyl transacylase activities. Its substrate specificity determines the biosynthesis of branched-chain and/or straight-chain of fatty acids. This is Beta-ketoacyl-[acyl-carrier-protein] synthase III from Burkholderia orbicola (strain AU 1054).